Here is a 345-residue protein sequence, read N- to C-terminus: Serine/arginine-rich splicing factor 6 (345 aa).

One can recognise an RRM 1 domain in the interval 1–72 (MPRVYIGRLS…ERVIVEHARG (72 aa)). Phosphoserine occurs at positions 45, 81, and 84. Positions 75–102 (RDRDGYSYGSRSGGGGYSSRRTSGRDKY) are disordered. The 74-residue stretch at 110–183 (FRLIVENLSS…RNIRLIEDKP (74 aa)) folds into the RRM 2 domain. An N6-acetyllysine modification is found at lysine 165. The tract at residues 176–345 (IRLIEDKPRT…RSRSRSSSRD (170 aa)) is disordered. A Glycyl lysine isopeptide (Lys-Gly) (interchain with G-Cter in SUMO2) cross-link involves residue lysine 182. Positions 185-250 (TSHRRSYSGS…RKSRSKSKSK (66 aa)) are enriched in basic residues. Composition is skewed to basic and acidic residues over residues 264–273 (RSKDEYEKSR) and 282–293 (SPKENGKGDIKS). Phosphoserine is present on residues serine 299 and serine 301. A Phosphoserine; by DYRK1A modification is found at serine 305. Phosphoserine is present on residues serine 316 and serine 318. Positions 323-345 (RASRSHSRSRSKSRSRSRSSSRD) are enriched in basic residues.

This sequence belongs to the splicing factor SR family. In terms of assembly, binds SREK1/SFRS12. Interacts with DYRK1A. Extensively phosphorylated on serine residues in the RS domain. Phosphorylated by DYRK1A, probably in the RS domain. Phosphorylation by DYRK1A modulates alternative splice site selection and inhibits the expression of MAPT/Tau exon 10.

Its subcellular location is the nucleus. It is found in the nucleus speckle. Plays a role in constitutive splicing and modulates the selection of alternative splice sites. Plays a role in the alternative splicing of MAPT/Tau exon 10. Binds to alternative exons of TNC pre-mRNA and promotes the expression of alternatively spliced TNC. Plays a role in wound healing and in the regulation of keratinocyte differentiation and proliferation via its role in alternative splicing. The protein is Serine/arginine-rich splicing factor 6 (SRSF6) of Bos taurus (Bovine).